Reading from the N-terminus, the 398-residue chain is MAKLTVKDVELKGKKVLVRVDFNVPIKDGVITNDNRITAALPTIKYILEQGGRAVLFSHLGRVKEEADKAGKSLAPVAKALSEKLGQDVVFPGTTRGAELEAAINELKDGEILLVENTRFEDIDGKKESKNDPELGKYWASLGDGIFVNDAFGTAHRAHASNVGISANVEKAVAGFLLENEIAYIQEAVEAPERPFVAILGGSKVSDKIGVIENLLSKADKVIIGGGMAYTFLKAQGYEIGTSLVEDDKLDLAKELLEKAAGKLILPLDHKVANAFAGYTEVKETADQNIPAGFMGLDVASKTIADYNTQLEGAKTVVWNGPVGVFENPDFQAGTVGLMEAIVKQPGVKSIIGGGDSAAAAINLGYAEKFSWISTGGGASMELLEGKVLPGLAALTEK.

Substrate contacts are provided by residues 21–23, R36, 59–62, R119, and R157; these read DFN and HLGR. ATP contacts are provided by residues K208, G296, E327, and 354 to 357; that span reads GGDS.

This sequence belongs to the phosphoglycerate kinase family. In terms of assembly, monomer.

It is found in the cytoplasm. It carries out the reaction (2R)-3-phosphoglycerate + ATP = (2R)-3-phospho-glyceroyl phosphate + ADP. It participates in carbohydrate degradation; glycolysis; pyruvate from D-glyceraldehyde 3-phosphate: step 2/5. The sequence is that of Phosphoglycerate kinase from Lactococcus lactis subsp. cremoris (strain SK11).